The following is a 1679-amino-acid chain: [F-actin]-monooxygenase mical2b (1679 aa).

The monooxygenase domain stretch occupies residues 2-494 (GETEEERTSQ…RHLFISGEQD (493 aa)). FAD contacts are provided by residues cysteine 97, 97–125 (CGFR…SRNN), glutamate 116, arginine 118, arginine 123, asparagine 125, and aspartate 398. In terms of domain architecture, Calponin-homology (CH) spans 516–619 (EVRPGRLLLW…MVLYLSKFYE (104 aa)). The short motif at 658–679 (RKRIPKLDKKLEESDVNRKRKK) is the Nuclear localization signal element. Disordered regions lie at residues 661-772 (IPKL…KAKW), 818-838 (SAYK…TPTL), 874-907 (SSLF…ESST), 1073-1163 (STRH…RSTA), 1194-1247 (KPED…DEIP), 1259-1283 (EYPK…ISFS), 1302-1342 (DLTN…PAPP), and 1473-1509 (RNKA…KKKE). Basic and acidic residues-rich tracts occupy residues 662-674 (PKLD…SDVN) and 697-707 (GEREEQKENKV). Residues 874 to 888 (SSLFTGNPAQPQTDE) are compositionally biased toward polar residues. The LIM zinc-binding domain occupies 1011-1073 (DTCVFCQKRV…KMHFSQRKTS (63 aa)). Positions 1086-1099 (IRSSSITISNHTST) are enriched in low complexity. Polar residues predominate over residues 1112-1123 (DSSTQQDLQTLP). Over residues 1133 to 1143 (EVKDSSKKADP) the composition is skewed to basic and acidic residues. Positions 1144–1154 (ADSAPACPDSP) are enriched in low complexity. A compositionally biased stretch (acidic residues) spans 1202 to 1211 (LAEEDGNSDF). Polar residues predominate over residues 1220–1242 (SKKPSNPSTDSNCLPTKDNSSTP). Positions 1259 to 1270 (EYPKPSSSSPEP) are enriched in low complexity. A compositionally biased stretch (polar residues) spans 1302-1325 (DLTNPGKSGAEEQQQQHVKPSISL). Pro residues predominate over residues 1333 to 1342 (THPQPEPAPP). A compositionally biased stretch (low complexity) spans 1475–1489 (KASAQQQQQQKSNSS). In terms of domain architecture, bMERB spans 1517-1667 (KSDELKRLHR…EKAEDRDLES (151 aa)).

It belongs to the Mical family. It depends on FAD as a cofactor.

It localises to the nucleus. Its subcellular location is the cytoplasm. The catalysed reaction is L-methionyl-[F-actin] + NADPH + O2 + H(+) = L-methionyl-(R)-S-oxide-[F-actin] + NADP(+) + H2O. In terms of biological role, nuclear monooxygenase that promotes depolymerization of F-actin by mediating oxidation of specific methionine residues on actin and regulates the srf signaling. Acts by modifying nuclear actin subunits through the addition of oxygen to form methionine-sulfoxide, leading to promote actin filament severing and prevent repolymerization. Acts as a key regulator of the srf signaling pathway elicited by nerve growth factor and serum: mediates oxidation and subsequent depolymerization of nuclear actin, leading to increase mkl1/mrtf-a presence in the nucleus and promote srf:mkl1/mrtf-a-dependent gene transcription. The protein is [F-actin]-monooxygenase mical2b of Danio rerio (Zebrafish).